An 87-amino-acid polypeptide reads, in one-letter code: Small ribosomal subunit protein uS15 (87 aa).

It belongs to the universal ribosomal protein uS15 family. Part of the 30S ribosomal subunit. Forms a bridge to the 50S subunit in the 70S ribosome, contacting the 23S rRNA.

Its function is as follows. One of the primary rRNA binding proteins, it binds directly to 16S rRNA where it helps nucleate assembly of the platform of the 30S subunit by binding and bridging several RNA helices of the 16S rRNA. In terms of biological role, forms an intersubunit bridge (bridge B4) with the 23S rRNA of the 50S subunit in the ribosome. The protein is Small ribosomal subunit protein uS15 of Clostridium beijerinckii (strain ATCC 51743 / NCIMB 8052) (Clostridium acetobutylicum).